The sequence spans 358 residues: Histidinol-phosphate aminotransferase (358 aa).

An N6-(pyridoxal phosphate)lysine modification is found at Lys-218.

This sequence belongs to the class-II pyridoxal-phosphate-dependent aminotransferase family. Histidinol-phosphate aminotransferase subfamily. As to quaternary structure, homodimer. Requires pyridoxal 5'-phosphate as cofactor.

The enzyme catalyses L-histidinol phosphate + 2-oxoglutarate = 3-(imidazol-4-yl)-2-oxopropyl phosphate + L-glutamate. It participates in amino-acid biosynthesis; L-histidine biosynthesis; L-histidine from 5-phospho-alpha-D-ribose 1-diphosphate: step 7/9. The chain is Histidinol-phosphate aminotransferase from Dehalococcoides mccartyi (strain ATCC BAA-2266 / KCTC 15142 / 195) (Dehalococcoides ethenogenes (strain 195)).